A 500-amino-acid chain; its full sequence is Low-density lipoprotein receptor-related protein 11 (500 aa).

A signal peptide spans 1–37; it reads MASVAQESAGSQRRLPPRHGALRGLLLLCLWLPSGRA. At 38–450 the chain is on the extracellular side; sequence ALPPAAPLSE…GGEHPAPETG (413 aa). Positions 99–184 constitute an MANSC domain; sequence AMPDAIIRTK…FALHSGYSSY (86 aa). N-linked (GlcNAc...) asparagine glycans are attached at residues asparagine 164 and asparagine 291. The PKD domain maps to 210-305; that stretch reads PLSKAGQDVV…VLRAAYSTGG (96 aa). The LDL-receptor class A domain maps to 309–345; the sequence is TCSRYHFFCDDGCCIDITLACDGVQQCPDGSDEDFCQ. 3 disulfide bridges follow: cysteine 310–cysteine 322, cysteine 317–cysteine 335, and cysteine 329–cysteine 344. The tract at residues 358–445 is disordered; that stretch reads AASPALPRTT…KGDGGGGEHP (88 aa). Asparagine 401 carries N-linked (GlcNAc...) asparagine glycosylation. A helical transmembrane segment spans residues 451–473; the sequence is AVLPLALGLAITALLLLMVACRL. Residues 474–500 lie on the Cytoplasmic side of the membrane; that stretch reads RLVKQKLKKARPITSEESDYLINGMYL. Serine 491 carries the phosphoserine modification.

It belongs to the LDLR family.

The protein resides in the membrane. In Homo sapiens (Human), this protein is Low-density lipoprotein receptor-related protein 11 (LRP11).